A 136-amino-acid polypeptide reads, in one-letter code: Succinate dehydrogenase assembly factor 3, mitochondrial (136 aa).

Residues 1 to 24 (MRASMVRRMAAAASSSASSSLRPA) constitute a mitochondrion transit peptide.

Belongs to the complex I LYR family. SDHAF3 subfamily. Interacts with the iron-sulfur protein subunit within the SDH catalytic dimer.

It localises to the mitochondrion matrix. Plays an essential role in the assembly of succinate dehydrogenase (SDH), an enzyme complex (also referred to as respiratory complex II) that is a component of both the tricarboxylic acid (TCA) cycle and the mitochondrial electron transport chain, and which couples the oxidation of succinate to fumarate with the reduction of ubiquinone (coenzyme Q) to ubiquinol. Promotes maturation of the iron-sulfur protein subunit of the SDH catalytic dimer, protecting it from the deleterious effects of oxidants. May act together with SDHAF1. This chain is Succinate dehydrogenase assembly factor 3, mitochondrial, found in Pyricularia oryzae (strain 70-15 / ATCC MYA-4617 / FGSC 8958) (Rice blast fungus).